Consider the following 597-residue polypeptide: NADPH-dependent diflavin oxidoreductase 1 (597 aa).

The region spanning 6-150 is the Flavodoxin-like domain; sequence LLVLFGSQTG…AIDPWLQDLW (145 aa). FMN is bound by residues 12 to 17, 59 to 62, 97 to 106, and aspartate 132; these read SQTGTA, ATTG, and LGDSSYAKFN. In terms of domain architecture, FAD-binding FR-type spans 206–446; it reads LQPFLAPMVS…WVRSGGLTFP (241 aa). Residues arginine 350, 382-385, and 416-419 contribute to the FAD site; these read RAFS and GLCS. NADP(+) contacts are provided by residues threonine 460, 515 to 516, 521 to 525, and aspartate 558; these read SR and KVYVQ. Tryptophan 596 is a binding site for FAD.

It belongs to the NADPH-dependent diflavin oxidoreductase NDOR1 family. This sequence in the N-terminal section; belongs to the flavodoxin family. The protein in the C-terminal section; belongs to the flavoprotein pyridine nucleotide cytochrome reductase family. As to quaternary structure, interacts with CIAPIN1; as part of the cytosolic iron-sulfur (Fe-S) protein assembly (CIA) machinery. Interacts with DCPS. FAD serves as cofactor. It depends on FMN as a cofactor.

It is found in the cytoplasm. The protein localises to the perinuclear region. It carries out the reaction 2 oxidized [2Fe-2S]-[protein] + NADPH = 2 reduced [2Fe-2S]-[protein] + NADP(+) + H(+). In terms of biological role, NADPH-dependent reductase which is a central component of the cytosolic iron-sulfur (Fe-S) protein assembly (CIA) machinery. Transfers electrons from NADPH via its FAD and FMN prosthetic groups to the [2Fe-2S] cluster of CIAPIN1, another key component of the CIA machinery. In turn, this reduced cluster provides electrons for assembly of cytosolic iron-sulfur cluster proteins. It can also reduce the [2Fe-2S] cluster of CISD1 and activate this protein implicated in Fe/S cluster repair. In vitro can fully activate methionine synthase/MTR in the presence of soluble cytochrome b5/CYB5A. The protein is NADPH-dependent diflavin oxidoreductase 1 of Bos taurus (Bovine).